Reading from the N-terminus, the 207-residue chain is Small ribosomal subunit protein uS5 (207 aa).

The disordered stretch occupies residues 1–51 (MTDTPTKQEITSKNDKVPGAIPGEQKKNNRNNDRKRNRRGDSKNLERDSDW). The segment covering 24–51 (EQKKNNRNNDRKRNRRGDSKNLERDSDW) has biased composition (basic and acidic residues). In terms of domain architecture, S5 DRBM spans 51 to 114 (WQERVVQIRR…SDGKKNLVRV (64 aa)).

This sequence belongs to the universal ribosomal protein uS5 family. In terms of assembly, part of the 30S ribosomal subunit. Contacts proteins S4 and S8.

In terms of biological role, with S4 and S12 plays an important role in translational accuracy. Located at the back of the 30S subunit body where it stabilizes the conformation of the head with respect to the body. This is Small ribosomal subunit protein uS5 from Prochlorococcus marinus (strain MIT 9312).